The primary structure comprises 529 residues: Transcription factor kayak (529 aa).

Residues 118-134 (LQGTDSDNSNASWADAQ) are compositionally biased toward polar residues. Disordered stretches follow at residues 118-166 (LQGT…SVNG) and 180-239 (NAGR…CRKR). 2 stretches are compositionally biased toward low complexity: residues 142 to 153 (TDTSSAHTDSTS) and 182 to 201 (GRGSTQGSNTNTSNSATPAR). A bZIP domain is found at 219–282 (EEKRRIRRER…NQLEFFLRAH (64 aa)). Residues 221–240 (KRRIRRERNKQAAARCRKRR) are basic motif. Positions 247 to 275 (LTYEVEQLEKKRDGLKKEMETLTDVKNQL) are leucine-zipper. 2 disordered regions span residues 311 to 390 (AGSC…PMST) and 493 to 529 (DGGTGLTPVSGPLVPSQNKHPLELPTPTAEPSKLVSL). Over residues 315–332 (DSGSSSHHNNNSNDSSNG) the composition is skewed to low complexity. Positions 340–350 (SLNSTGRSNSP) are enriched in polar residues. A Phosphoserine modification is found at serine 349. A compositionally biased stretch (low complexity) spans 363–375 (DGGLDSSCLLDQD). Over residues 376–387 (GPPPSKRFPLPP) the composition is skewed to pro residues.

This sequence belongs to the bZIP family. Fos subfamily. In terms of assembly, homodimer. Heterodimer with Jra. The kay-Jra heterodimer binds more stably to the AP-1 site than either of the two proteins alone.

Its subcellular location is the nucleus. In terms of biological role, developmentally regulated transcription factor AP-1 binds and recognizes the enhancer DNA sequence: 5'-TGA[CG]TCA-3'. May play a role in the function or determination of a particular subset of cells in the developing embryo. Is able to carry out its function either independently of or in conjunction with Jra. The polypeptide is Transcription factor kayak (Drosophila ananassae (Fruit fly)).